Consider the following 704-residue polypeptide: MNNVLSTNIAGKEMKVEFGKIGMLSNAATFMSYGDTVILTNVNASSEPRVGIDFFPLSVEYEERLYAVGKIPGGFIKREGRPSEKAILNGRAVDRTLRPLFPKGYRNDVQVVCTVVSVEKDNLPEILAINAASMALCLSSIPFTIPVAAVQVGLIDNNFIVNPNATEREESTLHLTVCATKERVMMIEAGGNEIPEDIMIDAIKFGFDECQKIINFQEEAVSKFGKEKDVPTLFTVDEEVEKDIKEFASDMIKEAMYITDKDERNAAIDAVNQKVKEEFGEKYEDKFGDIKEVLYNMQKKVVRHMLLKDKRRPDGRAFDEVRPLGCEIGLLPRTHGTGLFTRGLTQVMTVATLGAVGDIQILDGIDEAQSKRYMHHYNFPGYSVGEVKPLRGPGRREIGHGALAERALEPLIPSEEEFPYTIRLVSEVLSSNGSTSQASVCGSTLALLDAGVPLKRPAAGIAMGLITSEDLSEEQVLTDIQGIEDFFGDMDFKVAGTTEGITSIQVDTKLKGFSFNVVENAIRDARKARMTILDKINECISSPREDVSLYAPKTETIQIDPDKIRSVIGAGGKVINKIIQDTGVKIDIKEDGSVFVSSSDHAGVKEAIKIIEGLTKDVKAGEIYLGKVTKITTFGAFVEILPNKEGLVHISKLDKERVNKVEDVVSVGDEILVKVTEIDSQGRINLSRKDVLLDQENKENKEEK.

Residues Asp-485 and Asp-491 each coordinate Mg(2+). One can recognise a KH domain in the interval 552–611 (PKTETIQIDPDKIRSVIGAGGKVINKIIQDTGVKIDIKEDGSVFVSSSDHAGVKEAIKII). The S1 motif domain maps to 621–689 (GEIYLGKVTK…SQGRINLSRK (69 aa)).

Belongs to the polyribonucleotide nucleotidyltransferase family. It depends on Mg(2+) as a cofactor.

It is found in the cytoplasm. The catalysed reaction is RNA(n+1) + phosphate = RNA(n) + a ribonucleoside 5'-diphosphate. Involved in mRNA degradation. Catalyzes the phosphorolysis of single-stranded polyribonucleotides processively in the 3'- to 5'-direction. The protein is Polyribonucleotide nucleotidyltransferase of Clostridium botulinum (strain Eklund 17B / Type B).